We begin with the raw amino-acid sequence, 485 residues long: NADH-quinone oxidoreductase subunit N (485 aa).

A run of 14 helical transmembrane segments spans residues 8–28 (LIAL…MLCI), 35–55 (FVNA…LYFV), 75–95 (FYTG…YPWL), 105–125 (FYLL…ANHL), 127–147 (SLFI…GYAF), 159–179 (YMLL…LIYA), 203–223 (LLAG…LVPF), 235–255 (PAPV…GAVM), 271–291 (IVLS…AVSQ), 297–317 (LLGY…IAVQ), 326–346 (VGVY…VVSL), 374–394 (AVMT…GFFG), 407–426 (LWWL…YYYL), and 449–469 (ALTA…FFGL).

The protein belongs to the complex I subunit 2 family. NDH-1 is composed of 13 different subunits. Subunits NuoA, H, J, K, L, M, N constitute the membrane sector of the complex.

It localises to the cell inner membrane. It catalyses the reaction a quinone + NADH + 5 H(+)(in) = a quinol + NAD(+) + 4 H(+)(out). Functionally, NDH-1 shuttles electrons from NADH, via FMN and iron-sulfur (Fe-S) centers, to quinones in the respiratory chain. The immediate electron acceptor for the enzyme in this species is believed to be ubiquinone. Couples the redox reaction to proton translocation (for every two electrons transferred, four hydrogen ions are translocated across the cytoplasmic membrane), and thus conserves the redox energy in a proton gradient. The polypeptide is NADH-quinone oxidoreductase subunit N (Pectobacterium atrosepticum (strain SCRI 1043 / ATCC BAA-672) (Erwinia carotovora subsp. atroseptica)).